The sequence spans 2327 residues: Chondroitin sulfate proteoglycan 4 (2327 aa).

The signal sequence occupies residues 1–29; it reads MLLGPGHPLSAPALALALTLALLVRSTAP. Laminin G-like domains lie at 30–193 and 203–381; these read ASFF…HEGC and VGLG…SAGC. The interval 30–640 is globular or compact configuration stabilized by disulfide bonds; sequence ASFFGENHLE…HRGGPAQDLT (611 aa). The interval 30–640 is neurite growth inhibition; it reads ASFFGENHLE…HRGGPAQDLT (611 aa). At 30 to 2229 the chain is on the extracellular side; it reads ASFFGENHLE…LGFLEANMFS (2200 aa). An N-linked (GlcNAc...) asparagine glycan is attached at N130. C170 and C193 are oxidised to a cystine. Residue N349 is glycosylated (N-linked (GlcNAc...) asparagine). C355 and C381 are joined by a disulfide. N428 carries an N-linked (GlcNAc...) asparagine glycan. 3 CSPG repeats span residues 429–524, 554–646, and 663–765; these read FTQL…LEVS, PRII…VSDG, and AIQI…LEVQ. Positions 575-1045 are interaction with COL6A2; that stretch reads GPEIFQAYDP…RGGQRLLTTD (471 aa). An interaction with COL5A1 region spans residues 632-1451; it reads RGGPAQDLTF…SETQTDAFVL (820 aa). Residues N686 and N773 are each glycosylated (N-linked (GlcNAc...) asparagine). CSPG repeat units follow at residues 784–883 and 903–994; these read TVWM…FRVT and NAPV…FVAT. S1000 carries O-linked (Xyl...) (chondroitin sulfate) serine glycosylation. CSPG repeat units follow at residues 1023 to 1115, 1131 to 1221, 1243 to 1342, 1361 to 1454, 1478 to 1568, 1586 to 1684, 1709 to 1808, 1837 to 1929, and 1946 to 2034; these read APVQ…VSDG, YLHV…FSVA, PLQL…LDVA, TVIP…LLAN, PPVL…LSDG, LLSL…LLLS, PSRL…FRAH, PPQP…MSDG, and TIEV…VVAL. N-linked (GlcNAc...) asparagine glycosylation is found at N1136 and N1207. 2 N-linked (GlcNAc...) asparagine glycosylation sites follow: N1369 and N1454. Residues 1591 to 2226 are neurite growth inhibition; that stretch reads GTRKLTVCPE…GGFLGFLEAN (636 aa). A cysteine-containing region spans residues 1592–2226; the sequence is TRKLTVCPES…GGFLGFLEAN (635 aa). N-linked (GlcNAc...) asparagine glycosylation occurs at N1650. N-linked (GlcNAc...) asparagine glycosylation is found at N1914, N2021, N2039, N2045, and N2080. Residues 2043–2152 form a CSPG 15 repeat; it reads TVNVTVQALL…AGDRLTLELW (110 aa). The interval 2190-2210 is disordered; the sequence is ETEKPGRSVPTGQPGQAASSP. The segment covering 2199 to 2210 has biased composition (polar residues); the sequence is PTGQPGQAASSP. The chain crosses the membrane as a helical span at residues 2230–2250; sequence IIIPVCLILLLLALILPLLFY. The Cytoplasmic portion of the chain corresponds to 2251 to 2327; the sequence is LRKRNKTGKH…PALRNGQYWV (77 aa). The residue at position 2257 (T2257) is a Phosphothreonine; by PKC/PRKCA. The PDZ-binding motif lies at 2325 to 2327; that stretch reads YWV.

Interacts with ITGA4 through its chondroitin sulfate glycosaminoglycan. Interacts with BCAR1, CDC42 and ACK1. Interacts with MMP16. Interacts with the first PDZ domain of MPDZ. Interacts with PRKCA. Interacts with LGALS3 and the integrin composed of ITGB1 and ITGA3. Binds TNC, laminin-1, COL5A1 and COL6A2. Interacts with PLG and angiostatin. Binds FGF2 and PDGFA. Interacts with GRIP1, GRIP2 and GRIA2. Forms a ternary complex with GRIP1 and GRIA2. O-glycosylated; contains glycosaminoglycan chondroitin sulfate which are required for proper localization and function in stress fiber formation. Involved in interaction with MMP16 and ITGA4. In terms of processing, phosphorylation by PRKCA regulates its subcellular location and function in cell motility. Expressed in microcascular pericytes and not endothelial cells.

The protein resides in the cell membrane. It is found in the apical cell membrane. Its subcellular location is the cell projection. The protein localises to the lamellipodium membrane. It localises to the cell surface. In terms of biological role, proteoglycan playing a role in cell proliferation and migration which stimulates endothelial cells motility during microvascular morphogenesis. May also inhibit neurite outgrowth and growth cone collapse during axon regeneration. Cell surface receptor for collagen alpha 2(VI) which may confer cells ability to migrate on that substrate. Binds through its extracellular N-terminus growth factors, extracellular matrix proteases modulating their activity. May regulate MPP16-dependent degradation and invasion of type I collagen participating in melanoma cells invasion properties. May modulate the plasminogen system by enhancing plasminogen activation and inhibiting angiostatin. Also functions as a signal transducing protein by binding through its cytoplasmic C-terminus scaffolding and signaling proteins. May promote retraction fiber formation and cell polarization through Rho GTPase activation. May stimulate alpha-4, beta-1 integrin-mediated adhesion and spreading by recruiting and activating a signaling cascade through CDC42, ACK1 and BCAR1. May activate FAK and ERK1/ERK2 signaling cascades. This Mus musculus (Mouse) protein is Chondroitin sulfate proteoglycan 4 (Cspg4).